The primary structure comprises 509 residues: H/ACA ribonucleoprotein complex subunit DKC1 (509 aa).

Residues 1 to 24 (MADAEVITFPKKHKKKKDRKPLQE) form a disordered region. Alanine 2 carries the N-acetylalanine modification. The tract at residues 2–21 (ADAEVITFPKKHKKKKDRKP) is nucleolar localization. Positions 10 to 19 (PKKHKKKKDR) are enriched in basic residues. Residues lysine 20, lysine 39, and lysine 43 each participate in a glycyl lysine isopeptide (Lys-Gly) (interchain with G-Cter in SUMO2) cross-link. Catalysis depends on aspartate 125, which acts as the Nucleophile. Lysine 191 participates in a covalent cross-link: Glycyl lysine isopeptide (Lys-Gly) (interchain with G-Cter in SUMO2). In terms of domain architecture, PUA spans 297 to 372 (KRLVMKDSAV…VAKIKRVIME (76 aa)). Serine 387 carries the phosphoserine modification. Lysine 394 participates in a covalent cross-link: Glycyl lysine isopeptide (Lys-Gly) (interchain with G-Cter in SUMO2). Lysine 413 participates in a covalent cross-link: Glycyl lysine isopeptide (Lys-Gly) (interchain with G-Cter in SUMO1); alternate. Lysine 413 is covalently cross-linked (Glycyl lysine isopeptide (Lys-Gly) (interchain with G-Cter in SUMO2); alternate). Residue lysine 424 forms a Glycyl lysine isopeptide (Lys-Gly) (interchain with G-Cter in SUMO2) linkage. The nuclear and nucleolar localization stretch occupies residues 446–509 (KRKRDSESES…KVKVVEEMSE (64 aa)). Residues 447-509 (RKRDSESESD…KVKVVEEMSE (63 aa)) form a disordered region. Serine 451, serine 453, and serine 455 each carry phosphoserine. Phosphothreonine is present on threonine 458. The segment covering 466–476 (EKKKKKDKKPK) has biased composition (basic residues). Serine 481 is modified (phosphoserine). At threonine 485 the chain carries Phosphothreonine. Serine 508 bears the Phosphoserine mark.

This sequence belongs to the pseudouridine synthase TruB family. Part of the H/ACA small nucleolar ribonucleoprotein (H/ACA snoRNP) complex, which contains NHP2/NOLA2, GAR1/NOLA1, NOP10/NOLA3, and DKC1/NOLA4, which is presumed to be the catalytic subunit. The complex contains a stable core formed by binding of one or two NOP10-DKC1 heterodimers to NHP2; GAR1 subsequently binds to this core via DKC1. The complex binds a box H/ACA small nucleolar RNA (snoRNA), which may target the specific site of modification within the RNA substrate. During assembly, the complex contains NAF1 instead of GAR1/NOLA1. The complex also interacts with TERC, which contains a 3'-terminal domain related to the box H/ACA snoRNAs. Specific interactions with snoRNAs or TERC are mediated by GAR1 and NHP2. Associates with NOLC1/NOPP140. H/ACA snoRNPs interact with the SMN complex, consisting of SMN1 or SMN2, GEMIN2/SIP1, DDX20/GEMIN3, and GEMIN4. This is mediated by interaction between GAR1 and SMN1 or SMN2. The SMN complex may be required for correct assembly of the H/ACA snoRNP complex. Component of the telomerase holoenzyme complex composed of one molecule of TERT, one molecule of WRAP53/TCAB1, two molecules of H/ACA ribonucleoprotein complex subunits DKC1, NOP10, NHP2 and GAR1, and a telomerase RNA template component (TERC). The telomerase holoenzyme complex is associated with TEP1, SMG6/EST1A and POT1. Interacts with SHQ1; this interaction may lead to the stabilization of DKC1, from the time of its synthesis until its association with NOP10, NHP2, and NAF1 at the nascent H/ACA RNA. Interacts with HMBOX1. Interacts with DHX36. In terms of tissue distribution, ubiquitously expressed, with elevated levels in Purkinje cells, the olfactory bulb, and Leydig cells of the testis.

The protein resides in the nucleus. The protein localises to the nucleolus. It is found in the cajal body. The enzyme catalyses uridine in 5S rRNA = pseudouridine in 5S rRNA. Functionally, catalytic subunit of H/ACA small nucleolar ribonucleoprotein (H/ACA snoRNP) complex, which catalyzes pseudouridylation of rRNA. This involves the isomerization of uridine such that the ribose is subsequently attached to C5, instead of the normal N1. Each rRNA can contain up to 100 pseudouridine ('psi') residues, which may serve to stabilize the conformation of rRNAs. Required for ribosome biogenesis and telomere maintenance. Also required for correct processing or intranuclear trafficking of TERC, the RNA component of the telomerase reverse transcriptase (TERT) holoenzyme. The protein is H/ACA ribonucleoprotein complex subunit DKC1 (Dkc1) of Mus musculus (Mouse).